Reading from the N-terminus, the 250-residue chain is ATP synthase subunit a (250 aa).

6 helical membrane passes run 29–49 (ASLFMAASAAIAAGFLYFATS), 84–104 (FFPLVFSLFMFVLTANLLGMF), 114–134 (IIVTAALAILVIGTVVVYGFY), 143–163 (VFVPSGVPGILLPLVVTIEII), 193–213 (FVASLGALGAVGVGGAVLPLI), and 216–236 (VALTGLEFLVAFLQAYVFAVL).

Belongs to the ATPase A chain family. As to quaternary structure, F-type ATPases have 2 components, CF(1) - the catalytic core - and CF(0) - the membrane proton channel. CF(1) has five subunits: alpha(3), beta(3), gamma(1), delta(1), epsilon(1). CF(0) has three main subunits: a(1), b(2) and c(9-12). The alpha and beta chains form an alternating ring which encloses part of the gamma chain. CF(1) is attached to CF(0) by a central stalk formed by the gamma and epsilon chains, while a peripheral stalk is formed by the delta and b chains.

Its subcellular location is the cell inner membrane. In terms of biological role, key component of the proton channel; it plays a direct role in the translocation of protons across the membrane. The protein is ATP synthase subunit a of Rhizobium johnstonii (strain DSM 114642 / LMG 32736 / 3841) (Rhizobium leguminosarum bv. viciae).